A 55-amino-acid chain; its full sequence is uncharacterized protein (55 aa).

The helical transmembrane segment at 27–44 (SFWFILISASSFLIYSLF) threads the bilayer.

Its subcellular location is the membrane. This is an uncharacterized protein from Dictyostelium discoideum (Social amoeba).